The primary structure comprises 116 residues: Protein TRACHEARY ELEMENT DIFFERENTIATION-RELATED 6 (116 aa).

Topologically, residues 1–24 are extracellular; sequence MASTDSVYRPTPTPDHDTTVVVVV. A helical transmembrane segment spans residues 25 to 45; the sequence is FVSLGCVMFLAFLAFVIWFLI. Residues 46-116 lie on the Cytoplasmic side of the membrane; it reads KKRSRKHRER…GVGSSVVSRS (71 aa).

In terms of assembly, interacts with CESA7/IRX3, a subunit of the secondary cell wall (SCW)-related cellulose synthase complex. As to expression, expressed preferentially in differentiating vessel elements in seedlings.

Its subcellular location is the cell membrane. It localises to the secreted. The protein localises to the cell wall. Involved in the secondary cell wall (SCW) formation of vessel elements (e.g. protoxylem and metaxylem), thus promoting tracheary element (TE) differentiation. The sequence is that of Protein TRACHEARY ELEMENT DIFFERENTIATION-RELATED 6 from Arabidopsis thaliana (Mouse-ear cress).